Reading from the N-terminus, the 37-residue chain is uncharacterized protein (37 aa).

This is an uncharacterized protein from Saccharomyces cerevisiae (strain ATCC 204508 / S288c) (Baker's yeast).